A 320-amino-acid chain; its full sequence is Cytochrome f (320 aa).

A signal peptide spans 1–35; it reads MQNRNTFSWIKEQMTRSISVSIMIYVITRTAISNA. 4 residues coordinate heme: Tyr36, Cys56, Cys59, and His60. Residues 286 to 306 traverse the membrane as a helical segment; sequence VQGLLFFLASVILAQIFLVLK.

This sequence belongs to the cytochrome f family. As to quaternary structure, the 4 large subunits of the cytochrome b6-f complex are cytochrome b6, subunit IV (17 kDa polypeptide, petD), cytochrome f and the Rieske protein, while the 4 small subunits are PetG, PetL, PetM and PetN. The complex functions as a dimer. Heme is required as a cofactor.

Its subcellular location is the plastid. It localises to the chloroplast thylakoid membrane. Component of the cytochrome b6-f complex, which mediates electron transfer between photosystem II (PSII) and photosystem I (PSI), cyclic electron flow around PSI, and state transitions. This Platanus occidentalis (Sycamore) protein is Cytochrome f.